A 410-amino-acid polypeptide reads, in one-letter code: Cytochrome P450(BM-1) (410 aa).

C356 is a binding site for heme.

The protein belongs to the cytochrome P450 family. The cofactor is heme.

It localises to the cytoplasm. In terms of biological role, cytochromes P450 are a group of heme-thiolate monooxygenases. They oxidize a variety of structurally unrelated compounds, including steroids, fatty acids, and xenobiotics. In Priestia megaterium (strain ATCC 14581 / DSM 32 / CCUG 1817 / JCM 2506 / NBRC 15308 / NCIMB 9376 / NCTC 10342 / NRRL B-14308 / VKM B-512 / Ford 19) (Bacillus megaterium), this protein is Cytochrome P450(BM-1) (cyp106).